We begin with the raw amino-acid sequence, 745 residues long: Polyribonucleotide nucleotidyltransferase (745 aa).

The Mg(2+) site is built by aspartate 487 and aspartate 493. The region spanning 554–613 is the KH domain; the sequence is PSTTTIKIDKDKIRDIIGPGGKVIKEICEISGAKIDISDDGTVSIYASDRDKLKVALDKI. Residues 623 to 691 form the S1 motif domain; sequence GEIFNGTVMK…NKGKAKLTIK (69 aa). Positions 691 to 745 are disordered; it reads KNADKDKSSNNTKPKTNAKDNSEPEQRRDSSKKRAWNEDNNAETAEVITERKYFN. Residues 707–719 are compositionally biased toward basic and acidic residues; that stretch reads NAKDNSEPEQRRD.

The protein belongs to the polyribonucleotide nucleotidyltransferase family. Mg(2+) is required as a cofactor.

The protein resides in the cytoplasm. The enzyme catalyses RNA(n+1) + phosphate = RNA(n) + a ribonucleoside 5'-diphosphate. Its function is as follows. Involved in mRNA degradation. Catalyzes the phosphorolysis of single-stranded polyribonucleotides processively in the 3'- to 5'-direction. The protein is Polyribonucleotide nucleotidyltransferase of Rickettsia massiliae (strain Mtu5).